The sequence spans 118 residues: Thioredoxin AMT13 (118 aa).

Residues 1–110 (MSDNKAIQTL…LEDAIRANLG (110 aa)) form the Thioredoxin domain. Cys-36 and Cys-39 are joined by a disulfide.

It belongs to the thioredoxin family.

It functions in the pathway mycotoxin biosynthesis. Functionally, thioredoxin; part of the gene clusters that mediate the biosynthesis of AM-toxins, host-selective toxins (HSTs) causing Alternaria blotch on apple, a worldwide distributed disease. AM-toxins are cyclic depsipeptides containing the 3 residues 2-hydroxy-isovaleric acid (2-HIV), dehydroalanine, L-alanine which are common for all 3 AM-toxins I to III. The fourth precursor is L-alpha-amino-methoxyphenyl-valeric acid (L-Amv) for AM-toxin I, L-alpha-amino-phenyl-valeric acid (L-Apv) for AM-toxin II, and L-alpha-amino-hydroxyphenyl-valeric acid (L-Ahv) for AM-toxin III. AM-toxins have two target sites for affecting susceptible apple cells; they cause invagination of the plasma membrane and electrolyte loss and chloroplast disorganization. The non-ribosomal peptide synthetase AMT1 contains 4 catalytic modules and is responsible for activation of each residue in AM-toxin. The aldo-keto reductase AMT2 catalyzes the conversion of 2-keto-isovaleric acid (2-KIV) to 2-hydroxy-isovaleric acid (2-HIV), one of the precursor residues incorporated by AMT1 during AM-toxin biosynthesis, by reduction of its ketone to an alcohol. The cytochrome P450 monooxygenase AMT3 and the thioesterase AMT4 are also important for AM-toxin production, but their exact function within the AM-toxin biosynthesis are not known yet. Up to 21 proteins (including AMT1 to AMT4) are predicted to be involved in AM-toxin biosynthesis since their expression ishighly up-regulated in AM-toxin-producing cultures. This Alternaria alternata (Alternaria rot fungus) protein is Thioredoxin AMT13.